The primary structure comprises 450 residues: ATP-dependent protease ATPase subunit HslU (450 aa).

Residues V29, 71-76, D261, E328, and R400 each bind ATP; that span reads GVGKTE.

It belongs to the ClpX chaperone family. HslU subfamily. As to quaternary structure, a double ring-shaped homohexamer of HslV is capped on each side by a ring-shaped HslU homohexamer. The assembly of the HslU/HslV complex is dependent on binding of ATP.

The protein localises to the cytoplasm. Functionally, ATPase subunit of a proteasome-like degradation complex; this subunit has chaperone activity. The binding of ATP and its subsequent hydrolysis by HslU are essential for unfolding of protein substrates subsequently hydrolyzed by HslV. HslU recognizes the N-terminal part of its protein substrates and unfolds these before they are guided to HslV for hydrolysis. The chain is ATP-dependent protease ATPase subunit HslU from Rickettsia conorii (strain ATCC VR-613 / Malish 7).